The sequence spans 317 residues: Acetylglutamate kinase (317 aa).

Residues 75–76 (GG), Arg97, and Asn196 each bind substrate.

This sequence belongs to the acetylglutamate kinase family. ArgB subfamily.

It is found in the cytoplasm. It catalyses the reaction N-acetyl-L-glutamate + ATP = N-acetyl-L-glutamyl 5-phosphate + ADP. Its pathway is amino-acid biosynthesis; L-arginine biosynthesis; N(2)-acetyl-L-ornithine from L-glutamate: step 2/4. Catalyzes the ATP-dependent phosphorylation of N-acetyl-L-glutamate. The protein is Acetylglutamate kinase of Corynebacterium jeikeium (strain K411).